The chain runs to 516 residues: Serine carboxypeptidase II-3 (516 aa).

The signal sequence occupies residues Met-1–Gly-20. Residues Ala-21–Glu-77 constitute a propeptide that is removed on maturation. Intrachain disulfides connect Cys-143–Cys-391, Cys-300–Cys-315, and Cys-339–Cys-359. Residues Asn-194 and Asn-205 are each glycosylated (N-linked (GlcNAc...) asparagine). Residue Ser-236 is part of the active site. Residue Asn-301 is glycosylated (N-linked (GlcNAc...) asparagine). A propeptide spans Glu-342–Ser-352 (linker peptide). Asn-380 carries an N-linked (GlcNAc...) asparagine glycan. Residues Asp-427 and His-484 contribute to the active site.

The protein belongs to the peptidase S10 family. Carboxypeptidase II is a dimer, where each monomer is composed of two chains linked by a disulfide bond. In terms of processing, the linker peptide is endoproteolytically excised during enzyme maturation.

The catalysed reaction is Preferential release of a C-terminal arginine or lysine residue.. This chain is Serine carboxypeptidase II-3 (CXP;2-3), found in Hordeum vulgare (Barley).